We begin with the raw amino-acid sequence, 144 residues long: Large ribosomal subunit protein uL15 (144 aa).

The tract at residues 1–53 (MRLNTLSPAEGAKHAPKRLGRGIGSGLGKTGGRGHKGQNSRSGGGVRRGFEGG) is disordered. The span at 21 to 31 (RGIGSGLGKTG) shows a compositional bias: gly residues.

It belongs to the universal ribosomal protein uL15 family. Part of the 50S ribosomal subunit.

Its function is as follows. Binds to the 23S rRNA. This is Large ribosomal subunit protein uL15 from Pectobacterium atrosepticum (strain SCRI 1043 / ATCC BAA-672) (Erwinia carotovora subsp. atroseptica).